A 239-amino-acid chain; its full sequence is MATFTDAEIDELFETSGTVIDSIITAQGKPVETVGRSAIPRGKTKALSSAWEKHGSVQSPASQDTPDRQDRSDKQLSTPEQVTPHDSPPATSTDQPPTQAADEAGDTQLKTGASNSLLSMLDKLSNKSSNAKKGPMVKPPGRASSTSDSTAGESTKPRKQSRETAEPGQGRPWKPGHRREHSISWTMGGVTTISWCNPSCSPIRAEPRQYSCTCGSCPATCRLCASDDVYDGGDITEGK.

Disordered regions lie at residues 30 to 104 (PVET…ADEA) and 126 to 180 (NKSS…HRRE). The span at 65-74 (TPDRQDRSDK) shows a compositional bias: basic and acidic residues. Composition is skewed to polar residues over residues 89–98 (PATSTDQPPT) and 143–153 (ASSTSDSTAGE). Residues His-177, Cys-196, Cys-200, Cys-212, Cys-214, Cys-217, Cys-221, and Cys-224 each contribute to the Zn(2+) site.

Interacts with host STAT1. Interacts with host TXNL1. Interacts (via C-terminus) with host CacyBP; this interaction inhibits host cell apoptosis.

The protein localises to the host cytoplasm. It localises to the host nucleus. Protects the virus against cell antiviral state by blocking host interferon signaling. Mechanistically, targets host phosphorylated STAT1 (phospho-STAT1) for degradation, thereby inhibiting the interferon alpha signaling pathway. Plays a role in the inhibition of host apoptosis. Interacts with and down-regulates the expression of host TXNL1. In turn, inhibits TXNL1-induced apoptosis through the BCL2-BAX-caspase 3 pathway. Inhibits host apoptosis also by negatively regulating host CacyBP/SIP. Promotes viral replication by activating the extracellular signal-regulated kinase (ERK) pathway. This chain is Non-structural protein V (P/V), found in Gallus gallus (Chicken).